Reading from the N-terminus, the 165-residue chain is Nucleotide-binding protein Ctha_0558 (165 aa).

It belongs to the YajQ family.

Functionally, nucleotide-binding protein. The sequence is that of Nucleotide-binding protein Ctha_0558 from Chloroherpeton thalassium (strain ATCC 35110 / GB-78).